The chain runs to 413 residues: Peptidase T (413 aa).

Residue histidine 84 participates in Zn(2+) binding. The active site involves aspartate 86. Aspartate 146 serves as a coordination point for Zn(2+). Glutamate 180 (proton acceptor) is an active-site residue. 3 residues coordinate Zn(2+): glutamate 181, aspartate 203, and histidine 385.

Belongs to the peptidase M20B family. Zn(2+) is required as a cofactor.

It is found in the cytoplasm. The enzyme catalyses Release of the N-terminal residue from a tripeptide.. Functionally, cleaves the N-terminal amino acid of tripeptides. This is Peptidase T from Limosilactobacillus fermentum (strain NBRC 3956 / LMG 18251) (Lactobacillus fermentum).